We begin with the raw amino-acid sequence, 373 residues long: 3 beta-hydroxysteroid dehydrogenase/Delta 5--&gt;4-isomerase type 3 (373 aa).

The active-site Proton acceptor is the Y155. Residue K159 participates in NAD(+) binding. Residues 288–308 (VPILYWLAFLLETVSFLLSPI) form a helical membrane-spanning segment.

Belongs to the 3-beta-HSD family. Liver and kidney. Greater expression in liver.

The protein localises to the endoplasmic reticulum membrane. The protein resides in the mitochondrion membrane. It carries out the reaction a 3beta-hydroxy-Delta(5)-steroid + NAD(+) = a 3-oxo-Delta(5)-steroid + NADH + H(+). The enzyme catalyses a 3-oxo-Delta(5)-steroid = a 3-oxo-Delta(4)-steroid. Its pathway is lipid metabolism; steroid biosynthesis. Its function is as follows. 3-beta-HSD is a bifunctional enzyme, that catalyzes the oxidative conversion of Delta(5)-ene-3-beta-hydroxy steroid, and the oxidative conversion of ketosteroids. The 3-beta-HSD enzymatic system plays a crucial role in the biosynthesis of all classes of hormonal steroids. This Mus musculus (Mouse) protein is 3 beta-hydroxysteroid dehydrogenase/Delta 5--&gt;4-isomerase type 3 (Hsd3b3).